The sequence spans 220 residues: Pyridoxine/pyridoxamine 5'-phosphate oxidase (220 aa).

FMN contacts are provided by residues 49 to 54 (RMVLLK), 68 to 69 (YT), lysine 75, and glutamine 97. Residue lysine 54 participates in substrate binding. The substrate site is built by tyrosine 115, arginine 119, and serine 123. Residues 132-133 (QS) and tryptophan 176 each bind FMN. 182-184 (RLH) provides a ligand contact to substrate. Arginine 186 is a binding site for FMN.

Belongs to the pyridoxamine 5'-phosphate oxidase family. As to quaternary structure, homodimer. It depends on FMN as a cofactor.

The catalysed reaction is pyridoxamine 5'-phosphate + O2 + H2O = pyridoxal 5'-phosphate + H2O2 + NH4(+). The enzyme catalyses pyridoxine 5'-phosphate + O2 = pyridoxal 5'-phosphate + H2O2. It participates in cofactor metabolism; pyridoxal 5'-phosphate salvage; pyridoxal 5'-phosphate from pyridoxamine 5'-phosphate: step 1/1. The protein operates within cofactor metabolism; pyridoxal 5'-phosphate salvage; pyridoxal 5'-phosphate from pyridoxine 5'-phosphate: step 1/1. Its function is as follows. Catalyzes the oxidation of either pyridoxine 5'-phosphate (PNP) or pyridoxamine 5'-phosphate (PMP) into pyridoxal 5'-phosphate (PLP). The sequence is that of Pyridoxine/pyridoxamine 5'-phosphate oxidase from Paracoccus denitrificans (strain Pd 1222).